The primary structure comprises 551 residues: Transcription factor 7-like 1-B (551 aa).

Residues 1 to 11 (MPQLNGGGGDE) are compositionally biased toward gly residues. Disordered stretches follow at residues 1–76 (MPQL…DLES), 298–326 (QEPN…KPHI), and 392–525 (GWSA…PPSP). Positions 19-32 (ISFKDEGEQEDKIS) are enriched in basic and acidic residues. Residues 46–61 (SSLVSESENNSSSSDS) show a composition bias toward low complexity. A compositionally biased stretch (basic and acidic residues) spans 63–76 (QTERRPQPRADLES). A DNA-binding region (HMG box) is located at residues 326-394 (IKKPLNAFML…LHSQLYPGWS (69 aa)). Residues 449–468 (SPATPSAALASPAAPAATHS) show a composition bias toward low complexity. Residues 469-478 (EQAQPLSLTT) are compositionally biased toward polar residues. Residues 493 to 505 (SSSSSSSSSSSGL) are compositionally biased toward low complexity.

Belongs to the TCF/LEF family. Interacts with ctnnb1.

It localises to the nucleus. Its function is as follows. Participates in the Wnt signaling pathway. Probably binds to DNA and acts as a repressor in the absence of ctnnb1, and possibly as an activator in its presence. Regulates anterior-posterior patterning in the neuroectoderm by repressing posterior neural fates. Also required for hindbrain morphogenesis. The chain is Transcription factor 7-like 1-B (tcf7l1b) from Danio rerio (Zebrafish).